Consider the following 57-residue polypeptide: COP9 signalosome complex subunit 9 (57 aa).

Belongs to the CSN9 family. In terms of assembly, component of the CSN complex, probably composed of cops1, cops2, cops3, cops4, cops5, cops6, cops7, cops8 and cops9.

The protein resides in the nucleus. It localises to the cytoplasm. The protein localises to the nucleoplasm. Its function is as follows. Component of the COP9 signalosome complex (CSN), a complex involved in various cellular and developmental processes. The CSN complex is an essential regulator of the ubiquitin (Ubl) conjugation pathway by mediating the deneddylation of the cullin subunits of SCF-type E3 ligase complexes, leading to decrease the Ubl ligase activity. May play a role in cell proliferation. The chain is COP9 signalosome complex subunit 9 from Danio rerio (Zebrafish).